The chain runs to 643 residues: Threonine--tRNA ligase (643 aa).

Positions 1-61 (MPIITLPDGS…TEDSTLEIIT (61 aa)) constitute a TGS domain. The interval 243-534 (DHRKIGKALD…ITEEYAGFFP (292 aa)) is catalytic. Positions 334, 385, and 511 each coordinate Zn(2+).

This sequence belongs to the class-II aminoacyl-tRNA synthetase family. As to quaternary structure, homodimer. The cofactor is Zn(2+).

The protein resides in the cytoplasm. The enzyme catalyses tRNA(Thr) + L-threonine + ATP = L-threonyl-tRNA(Thr) + AMP + diphosphate + H(+). Its function is as follows. Catalyzes the attachment of threonine to tRNA(Thr) in a two-step reaction: L-threonine is first activated by ATP to form Thr-AMP and then transferred to the acceptor end of tRNA(Thr). Also edits incorrectly charged L-seryl-tRNA(Thr). In Mannheimia succiniciproducens (strain KCTC 0769BP / MBEL55E), this protein is Threonine--tRNA ligase.